A 122-amino-acid polypeptide reads, in one-letter code: MIQPQTHLNVADNSGARELMCIRIIGASNRRYAHIGDVIVAVIKEAVPNMPLQRSEVIRAVIVRTCKELKRDNGMIIRYDDNAAVVIDQEGNPKGTRVFGAIARELRQLNFTKIVSLAPEVL.

This sequence belongs to the universal ribosomal protein uL14 family. Part of the 50S ribosomal subunit.

Its subcellular location is the plastid. It localises to the chloroplast. Functionally, binds to 23S rRNA. The protein is Large ribosomal subunit protein uL14c of Drimys granadensis.